The following is a 591-amino-acid chain: Probable anion transporter 4, chloroplastic (591 aa).

The tract at residues 1-38 (MAMGAVLSSRTFASPLSSSGKQHPPQNNKCTCSSPPTR) is disordered. The transit peptide at 1 to 76 (MAMGAVLSSR…LSARFHQPVV (76 aa)) directs the protein to the chloroplast. The segment covering 8 to 36 (SSRTFASPLSSSGKQHPPQNNKCTCSSPP) has biased composition (polar residues). 11 consecutive transmembrane segments (helical) span residues 184–204 (VVLL…NMSI), 220–240 (VGLI…LGGI), 249–269 (VVLG…PLAA), 271–291 (IGLP…GVAM), 313–333 (LVYS…PLLI), 336–356 (FGWP…FALW), 402–422 (VWAL…LLTW), 440–460 (LLCV…GWIA), 475–495 (KIMQ…LSKV), 531–551 (AGVL…FGTA), and 565–585 (VFQV…VFST).

It belongs to the major facilitator superfamily. Sodium/anion cotransporter (TC 2.A.1.14) family.

The protein resides in the plastid. The protein localises to the chloroplast membrane. In terms of biological role, probable anion transporter. The sequence is that of Probable anion transporter 4, chloroplastic (PHT4;4) from Oryza sativa subsp. japonica (Rice).